The sequence spans 689 residues: DNA ligase (689 aa).

NAD(+) contacts are provided by residues 58–62 (DQEYD), 107–108 (SL), and Glu-138. The active-site N6-AMP-lysine intermediate is Lys-140. The NAD(+) site is built by Arg-161, Glu-198, Lys-314, and Lys-338. Zn(2+) is bound by residues Cys-432, Cys-435, Cys-448, and Cys-453. In terms of domain architecture, BRCT spans 611–689 (ASSGTLSGKT…QELLEMLHGG (79 aa)).

It belongs to the NAD-dependent DNA ligase family. LigA subfamily. Mg(2+) is required as a cofactor. The cofactor is Mn(2+).

It catalyses the reaction NAD(+) + (deoxyribonucleotide)n-3'-hydroxyl + 5'-phospho-(deoxyribonucleotide)m = (deoxyribonucleotide)n+m + AMP + beta-nicotinamide D-nucleotide.. In terms of biological role, DNA ligase that catalyzes the formation of phosphodiester linkages between 5'-phosphoryl and 3'-hydroxyl groups in double-stranded DNA using NAD as a coenzyme and as the energy source for the reaction. It is essential for DNA replication and repair of damaged DNA. This Methylacidiphilum infernorum (isolate V4) (Methylokorus infernorum (strain V4)) protein is DNA ligase.